A 122-amino-acid polypeptide reads, in one-letter code: Large ribosomal subunit protein uL14 (122 aa).

The protein belongs to the universal ribosomal protein uL14 family. In terms of assembly, part of the 50S ribosomal subunit. Forms a cluster with proteins L3 and L19. In the 70S ribosome, L14 and L19 interact and together make contacts with the 16S rRNA in bridges B5 and B8.

Binds to 23S rRNA. Forms part of two intersubunit bridges in the 70S ribosome. This is Large ribosomal subunit protein uL14 from Acaryochloris marina (strain MBIC 11017).